Reading from the N-terminus, the 122-residue chain is Large ribosomal subunit protein uL14 (122 aa).

This sequence belongs to the universal ribosomal protein uL14 family. In terms of assembly, part of the 50S ribosomal subunit. Forms a cluster with proteins L3 and L19. In the 70S ribosome, L14 and L19 interact and together make contacts with the 16S rRNA in bridges B5 and B8.

In terms of biological role, binds to 23S rRNA. Forms part of two intersubunit bridges in the 70S ribosome. The protein is Large ribosomal subunit protein uL14 of Mycobacterium sp. (strain KMS).